The primary structure comprises 256 residues: Thiazole synthase (256 aa).

Catalysis depends on lysine 96, which acts as the Schiff-base intermediate with DXP. Residues glycine 157, 184 to 185, and 206 to 207 each bind 1-deoxy-D-xylulose 5-phosphate; these read AG and NT.

It belongs to the ThiG family. In terms of assembly, homotetramer. Forms heterodimers with either ThiH or ThiS.

It is found in the cytoplasm. It carries out the reaction [ThiS sulfur-carrier protein]-C-terminal-Gly-aminoethanethioate + 2-iminoacetate + 1-deoxy-D-xylulose 5-phosphate = [ThiS sulfur-carrier protein]-C-terminal Gly-Gly + 2-[(2R,5Z)-2-carboxy-4-methylthiazol-5(2H)-ylidene]ethyl phosphate + 2 H2O + H(+). Its pathway is cofactor biosynthesis; thiamine diphosphate biosynthesis. Its function is as follows. Catalyzes the rearrangement of 1-deoxy-D-xylulose 5-phosphate (DXP) to produce the thiazole phosphate moiety of thiamine. Sulfur is provided by the thiocarboxylate moiety of the carrier protein ThiS. In vitro, sulfur can be provided by H(2)S. In Roseobacter denitrificans (strain ATCC 33942 / OCh 114) (Erythrobacter sp. (strain OCh 114)), this protein is Thiazole synthase.